Reading from the N-terminus, the 126-residue chain is Ribosome-binding factor A (126 aa).

It belongs to the RbfA family. In terms of assembly, monomer. Binds 30S ribosomal subunits, but not 50S ribosomal subunits or 70S ribosomes.

It is found in the cytoplasm. In terms of biological role, one of several proteins that assist in the late maturation steps of the functional core of the 30S ribosomal subunit. Associates with free 30S ribosomal subunits (but not with 30S subunits that are part of 70S ribosomes or polysomes). Required for efficient processing of 16S rRNA. May interact with the 5'-terminal helix region of 16S rRNA. This chain is Ribosome-binding factor A, found in Thermosynechococcus vestitus (strain NIES-2133 / IAM M-273 / BP-1).